Consider the following 294-residue polypeptide: MKKTLLAAGAVLALSSSFTVNAAENDKPQYLSDWWHQSVNVVGSYHTRFGPQIRNDTYLEYEAFAKKDWFDFYGYADAPVFFGGNSDAKGIWNHGSPLFMEIEPRFSIDKLTNTDLSFGPFKEWYFANNYIYDMGRNKDGRQSTWYMGLGTDIDTGLPMSLSMNVYAKYQWQNYGAANENEWDGYRFKIKYFVPITDLWGGQLSYIGFTNFDWGSDLGDDSGNAINGIKTRTNNSIASSHILALNYDHWHYSVVARYWHDGGQWNDDAELNFGNGNFNVRSTGWGGYLVVGYNF.

A signal peptide spans 1-22 (MKKTLLAAGAVLALSSSFTVNA).

It belongs to the nucleoside-specific channel-forming outer membrane porin (Tsx) (TC 1.B.10) family.

The protein resides in the cell outer membrane. In terms of biological role, functions as a substrate-specific channel for nucleosides and deoxynucleosides. The sequence is that of Nucleoside-specific channel-forming protein Tsx (tsx) from Escherichia coli O157:H7.